The chain runs to 864 residues: Protein translocase subunit SecA (864 aa).

Residues Gln87, Gly105–Thr109, and Asp512 contribute to the ATP site.

The protein belongs to the SecA family. As to quaternary structure, monomer and homodimer. Part of the essential Sec protein translocation apparatus which comprises SecA, SecYEG and auxiliary proteins SecDF-YajC and YidC.

The protein localises to the cell inner membrane. It is found in the cytoplasm. The enzyme catalyses ATP + H2O + cellular proteinSide 1 = ADP + phosphate + cellular proteinSide 2.. Functionally, part of the Sec protein translocase complex. Interacts with the SecYEG preprotein conducting channel. Has a central role in coupling the hydrolysis of ATP to the transfer of proteins into and across the cell membrane, serving as an ATP-driven molecular motor driving the stepwise translocation of polypeptide chains across the membrane. The chain is Protein translocase subunit SecA from Buchnera aphidicola subsp. Cinara cedri (strain Cc).